A 226-amino-acid polypeptide reads, in one-letter code: MKSLLPISSLLVLLGSASVSAADLNIPMSFEYLALDGKKVESSVFNHKSSLELAPGTHKVAIRYHEMVEDDFSDSQTFVKSSPFIVTLEVDGDHQYYLQAAEGKVVKKPKVFAQNPQVVLTRADKGQVNYQVTNTNIEEESFVSRLFSGNQAVDVSGTAATATGVAVAATPAPTSAQVAVSATATTSPTDASKATGANPQQMLQYWWLQADEKTRKEFMSWAISQL.

Positions 1–21 (MKSLLPISSLLVLLGSASVSA) are cleaved as a signal peptide.

This sequence belongs to the UPF0319 family.

The protein is UPF0319 protein SO_1816 of Shewanella oneidensis (strain ATCC 700550 / JCM 31522 / CIP 106686 / LMG 19005 / NCIMB 14063 / MR-1).